The chain runs to 86 residues: DNA-directed RNA polymerase subunit omega (86 aa).

The protein belongs to the RNA polymerase subunit omega family. The RNAP catalytic core consists of 2 alpha, 1 beta, 1 beta' and 1 omega subunit. When a sigma factor is associated with the core the holoenzyme is formed, which can initiate transcription.

The catalysed reaction is RNA(n) + a ribonucleoside 5'-triphosphate = RNA(n+1) + diphosphate. Functionally, promotes RNA polymerase assembly. Latches the N- and C-terminal regions of the beta' subunit thereby facilitating its interaction with the beta and alpha subunits. In Psychrobacter arcticus (strain DSM 17307 / VKM B-2377 / 273-4), this protein is DNA-directed RNA polymerase subunit omega.